The chain runs to 1578 residues: Neurexin-3 (1578 aa).

The signal sequence occupies residues 1-27; that stretch reads MSFTLHSVFFTLKVSSFLGSLVGLCLG. The 175-residue stretch at 28–202 folds into the Laminin G-like 1 domain; that stretch reads LEFMGLPNQW…SVQLEAEGPC (175 aa). The Extracellular portion of the chain corresponds to 28-1503; that stretch reads LEFMGLPNQW…EVIRESNSTT (1476 aa). N-linked (GlcNAc...) asparagine glycans are attached at residues Asn-58 and Asn-105. Residues 198 to 235 enclose the EGF-like 1 domain; sequence AEGPCGERPCENGGICFLLDGHPTCDCSTTGYGGTLCS. 3 disulfides stabilise this stretch: Cys-202/Cys-213, Cys-207/Cys-222, and Cys-224/Cys-234. Laminin G-like domains follow at residues 260–444 and 451–643; these read ENVA…VFKC and DPIN…KSSC. Residues Asp-308, Leu-325, and Met-378 each contribute to the Ca(2+) site. 5 disulfide bridges follow: Cys-408–Cys-444, Cys-614–Cys-643, Cys-651–Cys-662, Cys-656–Cys-671, and Cys-673–Cys-683. Positions 647–684 constitute an EGF-like 2 domain; it reads SAKQCDSYPCKNNAVCKDGWNRFICDCTGTGYWGRTCE. 2 consecutive Laminin G-like domains span residues 689 to 861 and 875 to 1050; these read ILSY…IDYC and DPVT…DRGC. Ca(2+) is bound by residues Asp-736 and Leu-753. Residue Asn-761 is glycosylated (N-linked (GlcNAc...) asparagine). Arg-811 contributes to the Ca(2+) binding site. 4 disulfide bridges follow: Cys-1022–Cys-1050, Cys-1057–Cys-1068, Cys-1062–Cys-1077, and Cys-1079–Cys-1089. An EGF-like 3 domain is found at 1053–1090; sequence PSTTCQEDSCANQGVCMQQWEGFTCDCSMTSYSGNQCN. Positions 1094–1294 constitute a Laminin G-like 6 domain; the sequence is ATYIFGKSGG…NPNIKINGSV (201 aa). 2 residues coordinate Ca(2+): Asp-1146 and Ile-1163. N-linked (GlcNAc...) asparagine glycosylation occurs at Asn-1193. Ile-1245 and Asn-1247 together coordinate Ca(2+). Residues Asn-1291 and Asn-1335 are each glycosylated (N-linked (GlcNAc...) asparagine). The tract at residues 1328–1352 is disordered; that stretch reads ATTTTRKNRSTASIQPTSDDLVSSA. Polar residues predominate over residues 1337–1352; it reads STASIQPTSDDLVSSA. Ser-1351 carries O-linked (Xyl...) (heparan sulfate) serine glycosylation. Asn-1500 carries an N-linked (GlcNAc...) asparagine glycan. The chain crosses the membrane as a helical span at residues 1504–1524; it reads GMVVGIVAAAALCILILLYAM. Residues 1525 to 1578 are Cytoplasmic-facing; sequence YKYRNRDEGSYQVDETRNYISNSAQSNGTLMKEKQASSKSGHKKQKNKDKEYYV. Residues 1546 to 1578 form a disordered region; sequence NSAQSNGTLMKEKQASSKSGHKKQKNKDKEYYV.

The protein belongs to the neurexin family. The laminin G-like domain 2 binds to NXPH1. Isoform 8/alpha-4B binds to alpha-dystroglycan. The cytoplasmic C-terminal region binds to CASK. Specific isoforms bind neuroligins NLGN1, NLGN2 and NLGN3. Interacts with CLSTN3. In terms of processing, O-glycosylated; contains heparan sulfate. Heparan sulfate attachment is required for synapse development by mediating interactions with neuroligins. As to expression, brain.

The protein localises to the presynaptic cell membrane. Its function is as follows. Neuronal cell surface protein that may be involved in cell recognition and cell adhesion. May mediate intracellular signaling. This is Neurexin-3 (Nrxn3) from Rattus norvegicus (Rat).